The following is a 402-amino-acid chain: Mannonate dehydratase 1 (402 aa).

It belongs to the mannonate dehydratase family. Requires Fe(2+) as cofactor. It depends on Mn(2+) as a cofactor.

The catalysed reaction is D-mannonate = 2-dehydro-3-deoxy-D-gluconate + H2O. It functions in the pathway carbohydrate metabolism; pentose and glucuronate interconversion. In terms of biological role, catalyzes the dehydration of D-mannonate. This Agrobacterium fabrum (strain C58 / ATCC 33970) (Agrobacterium tumefaciens (strain C58)) protein is Mannonate dehydratase 1 (uxuA1).